The following is a 401-amino-acid chain: Glycerol-1-phosphate dehydrogenase [NAD(P)+] (401 aa).

NAD(+) is bound by residues D57, 118–122, and 140–143; these read GTIHD and TAPS. D145 is a binding site for substrate. S149 serves as a coordination point for NAD(+). D192 serves as a coordination point for substrate. D192 and H272 together coordinate Ni(2+). H276 is a substrate binding site. H292 serves as a coordination point for Ni(2+).

This sequence belongs to the glycerol-1-phosphate dehydrogenase family. In terms of assembly, homodimer. Ni(2+) is required as a cofactor.

The protein localises to the cytoplasm. The catalysed reaction is sn-glycerol 1-phosphate + NAD(+) = dihydroxyacetone phosphate + NADH + H(+). The enzyme catalyses sn-glycerol 1-phosphate + NADP(+) = dihydroxyacetone phosphate + NADPH + H(+). Functionally, catalyzes the NAD(P)H-dependent reduction of dihydroxyacetonephosphate (DHAP or glycerone phosphate) to glycerol 1-phosphate (G1P). The G1P thus generated is probably used for the synthesis of phosphoglycerolipids in Gram-positive bacterial species. In Bacillus licheniformis (strain ATCC 14580 / DSM 13 / JCM 2505 / CCUG 7422 / NBRC 12200 / NCIMB 9375 / NCTC 10341 / NRRL NRS-1264 / Gibson 46), this protein is Glycerol-1-phosphate dehydrogenase [NAD(P)+].